The sequence spans 221 residues: ATP-dependent dethiobiotin synthetase BioD (221 aa).

12-17 (EVGKTV) provides a ligand contact to ATP. Thr16 lines the Mg(2+) pocket. Lys39 is a catalytic residue. Thr43 contributes to the substrate binding site. ATP is bound by residues Asp47, 105–108 (EGLG), and 165–166 (SC). Mg(2+)-binding residues include Asp47 and Glu105.

It belongs to the dethiobiotin synthetase family. As to quaternary structure, homodimer. Mg(2+) is required as a cofactor.

It is found in the cytoplasm. The catalysed reaction is (7R,8S)-7,8-diammoniononanoate + CO2 + ATP = (4R,5S)-dethiobiotin + ADP + phosphate + 3 H(+). It catalyses the reaction (7R,8S)-8-amino-7-(carboxyamino)nonanoate + ATP = (4R,5S)-dethiobiotin + ADP + phosphate + H(+). It participates in cofactor biosynthesis; biotin biosynthesis; biotin from 7,8-diaminononanoate: step 1/2. Its function is as follows. Catalyzes a mechanistically unusual reaction, the ATP-dependent insertion of CO2 between the N7 and N8 nitrogen atoms of 7,8-diaminopelargonic acid (DAPA, also called 7,8-diammoniononanoate) to form a ureido ring. This cyanobacterium does not encode bioA (which catalyzes the formation of the precursor for this reaction in the cannonical pathway), instead it encodes bioU, which replaces bioA and also performs the first half of the cannonical BioD reaction. Thus in this organism BioD has a different substrate. In Crocosphaera subtropica (strain ATCC 51142 / BH68) (Cyanothece sp. (strain ATCC 51142)), this protein is ATP-dependent dethiobiotin synthetase BioD.